We begin with the raw amino-acid sequence, 490 residues long: Ribulose bisphosphate carboxylase large chain (490 aa).

Residues Asn-127 and Thr-177 each coordinate substrate. Lys-179 (proton acceptor) is an active-site residue. Residue Lys-181 participates in substrate binding. Mg(2+) contacts are provided by Lys-205, Asp-207, and Glu-208. Lys-205 is subject to N6-carboxylysine. Catalysis depends on His-297, which acts as the Proton acceptor. 3 residues coordinate substrate: Arg-298, His-330, and Ser-382.

Belongs to the RuBisCO large chain family. Type I subfamily. In terms of assembly, heterohexadecamer of 8 large chains and 8 small chains. It depends on Mg(2+) as a cofactor.

It localises to the plastid. It is found in the chloroplast. It catalyses the reaction 2 (2R)-3-phosphoglycerate + 2 H(+) = D-ribulose 1,5-bisphosphate + CO2 + H2O. The enzyme catalyses D-ribulose 1,5-bisphosphate + O2 = 2-phosphoglycolate + (2R)-3-phosphoglycerate + 2 H(+). RuBisCO catalyzes two reactions: the carboxylation of D-ribulose 1,5-bisphosphate, the primary event in carbon dioxide fixation, as well as the oxidative fragmentation of the pentose substrate in the photorespiration process. Both reactions occur simultaneously and in competition at the same active site. This is Ribulose bisphosphate carboxylase large chain from Phaeodactylum tricornutum (strain CCAP 1055/1).